Reading from the N-terminus, the 968-residue chain is Glycine dehydrogenase (decarboxylating) (968 aa).

Lysine 717 bears the N6-(pyridoxal phosphate)lysine mark.

It belongs to the GcvP family. As to quaternary structure, the glycine cleavage system is composed of four proteins: P, T, L and H. Pyridoxal 5'-phosphate is required as a cofactor.

It carries out the reaction N(6)-[(R)-lipoyl]-L-lysyl-[glycine-cleavage complex H protein] + glycine + H(+) = N(6)-[(R)-S(8)-aminomethyldihydrolipoyl]-L-lysyl-[glycine-cleavage complex H protein] + CO2. In terms of biological role, the glycine cleavage system catalyzes the degradation of glycine. The P protein binds the alpha-amino group of glycine through its pyridoxal phosphate cofactor; CO(2) is released and the remaining methylamine moiety is then transferred to the lipoamide cofactor of the H protein. The chain is Glycine dehydrogenase (decarboxylating) from Tropheryma whipplei (strain TW08/27) (Whipple's bacillus).